Here is a 257-residue protein sequence, read N- to C-terminus: Phycoerythrobilin:ferredoxin oxidoreductase (257 aa).

This sequence belongs to the HY2 family.

The enzyme catalyses (3Z)-phycoerythrobilin + oxidized 2[4Fe-4S]-[ferredoxin] = 15,16-dihydrobiliverdin + reduced 2[4Fe-4S]-[ferredoxin] + 2 H(+). Catalyzes the two-electron reduction of the C2 and C3(1) diene system of 15,16-dihydrobiliverdin. The chain is Phycoerythrobilin:ferredoxin oxidoreductase from Synechococcus sp. (strain CC9311).